The following is a 465-amino-acid chain: Argininosuccinate lyase (465 aa).

The protein belongs to the lyase 1 family. Argininosuccinate lyase subfamily.

The protein localises to the cytoplasm. The catalysed reaction is 2-(N(omega)-L-arginino)succinate = fumarate + L-arginine. It participates in amino-acid biosynthesis; L-arginine biosynthesis; L-arginine from L-ornithine and carbamoyl phosphate: step 3/3. This is Argininosuccinate lyase from Desulfatibacillum aliphaticivorans.